Here is a 224-residue protein sequence, read N- to C-terminus: Probable Brix domain-containing ribosomal biogenesis protein (224 aa).

The 196-residue stretch at 1-196 (MMLITTSHRP…IWIMEDGRRW (196 aa)) folds into the Brix domain.

Probably involved in the biogenesis of the ribosome. In Pyrococcus abyssi (strain GE5 / Orsay), this protein is Probable Brix domain-containing ribosomal biogenesis protein.